A 373-amino-acid polypeptide reads, in one-letter code: Unsaturated rhamnogalacturonyl hydrolase YteR (373 aa).

Substrate is bound by residues 40–41, aspartate 88, and 132–136; these read HY and HKDGY. Catalysis depends on aspartate 143, which acts as the Proton donor. Residues 213 to 217 and 333 to 334 each bind substrate; these read RSIGW and TS.

This sequence belongs to the glycosyl hydrolase 105 family. In terms of assembly, monomer.

The protein resides in the cytoplasm. It catalyses the reaction 2-O-(4-deoxy-beta-L-threo-hex-4-enopyranuronosyl)-alpha-L-rhamnose + H2O = 5-dehydro-4-deoxy-D-glucuronate + L-rhamnopyranose. Catalyzes the hydrolysis of unsaturated rhamnogalacturonan disaccharide to yield unsaturated D-galacturonic acid and L-rhamnose. It cannot act on unsaturated glucuronyl hydrolase (UGL) substrates containing unsaturated D-glucuronic acid at the non-reducing terminus, although the active pockets of YesR and UGL are very similar. This chain is Unsaturated rhamnogalacturonyl hydrolase YteR (yteR), found in Bacillus subtilis (strain 168).